Reading from the N-terminus, the 477-residue chain is Erythritol/L-threitol-binding protein (477 aa).

Residues 1–38 constitute a signal peptide (tat-type signal); the sequence is MMSRESQPGLHRQLSRRNMLAAMGLAGAAAVSLPVLSA.

This sequence belongs to the bacterial solute-binding protein 1 family. Predicted to be exported by the Tat system. The position of the signal peptide cleavage has not been experimentally proven.

In terms of biological role, part of an ABC transporter complex involved in erythritol/L-threitol import. Binds erythritol and L-threitol. Functions in the transport for the degradation pathways of erythritol and L-threitol, that allow M.smegmatis to grow on these compounds as the sole carbon source. The polypeptide is Erythritol/L-threitol-binding protein (Mycolicibacterium smegmatis (strain ATCC 700084 / mc(2)155) (Mycobacterium smegmatis)).